Reading from the N-terminus, the 746-residue chain is Protein O-mannosyl-transferase 1 (746 aa).

7 helical membrane-spanning segments follow: residues 30-50, 90-110, 121-141, 144-164, 176-196, 228-248, and 266-286; these read PLVV…LGLL, FGHM…NFLW, VPIW…VPMA, IVLE…LMLI, LLES…LKFF, MGIF…WNLI, and IVAL…VHLM. MIR domains follow at residues 318–381, 392–449, and 453–513; these read PLEV…VKDP, PRPV…LDIV, and SNRD…VEEH. N-linked (GlcNAc...) asparagine glycans are attached at residues Asn-435, Asn-471, and Asn-539. A run of 3 helical transmembrane segments spans residues 597–617, 636–656, and 660–680; these read IVIW…FFWY, WVLA…PFFL, and VLFL…LPIV.

Belongs to the glycosyltransferase 39 family.

The protein localises to the endoplasmic reticulum membrane. It carries out the reaction a di-trans,poly-cis-dolichyl beta-D-mannosyl phosphate + L-seryl-[protein] = 3-O-(alpha-D-mannosyl)-L-seryl-[protein] + a di-trans,poly-cis-dolichyl phosphate + H(+). The enzyme catalyses a di-trans,poly-cis-dolichyl beta-D-mannosyl phosphate + L-threonyl-[protein] = 3-O-(alpha-D-mannosyl)-L-threonyl-[protein] + a di-trans,poly-cis-dolichyl phosphate + H(+). It participates in protein modification; protein glycosylation. In terms of biological role, transfers mannosyl residues to the hydroxyl group of serine or threonine residues. Coexpression of both POMT1 and POMT2 is necessary for enzyme activity, expression of either POMT1 or POMT2 alone is insufficient. Essentially dedicated to O-mannosylation of alpha-DAG1 and few other proteins but not of cadherins and protocaherins. This Mus musculus (Mouse) protein is Protein O-mannosyl-transferase 1 (Pomt1).